Here is a 116-residue protein sequence, read N- to C-terminus: Anti-sigma F factor antagonist (116 aa).

Residues 3–113 (LAIDLEVKKD…ESEQYALHRL (111 aa)) form the STAS domain. Ser58 is subject to Phosphoserine.

Belongs to the anti-sigma-factor antagonist family. Phosphorylated by SpoIIAB on a serine residue.

In terms of biological role, in the phosphorylated form it could act as an anti-anti-sigma factor that counteracts SpoIIAB and thus releases sigma f from inhibition. This is Anti-sigma F factor antagonist (spoIIAA) from Heyndrickxia coagulans (Weizmannia coagulans).